We begin with the raw amino-acid sequence, 246 residues long: 1-(5-phosphoribosyl)-5-[(5-phosphoribosylamino)methylideneamino] imidazole-4-carboxamide isomerase (246 aa).

The active-site Proton acceptor is the D8. D130 serves as the catalytic Proton donor.

It belongs to the HisA/HisF family.

The protein localises to the cytoplasm. The enzyme catalyses 1-(5-phospho-beta-D-ribosyl)-5-[(5-phospho-beta-D-ribosylamino)methylideneamino]imidazole-4-carboxamide = 5-[(5-phospho-1-deoxy-D-ribulos-1-ylimino)methylamino]-1-(5-phospho-beta-D-ribosyl)imidazole-4-carboxamide. It participates in amino-acid biosynthesis; L-histidine biosynthesis; L-histidine from 5-phospho-alpha-D-ribose 1-diphosphate: step 4/9. The protein is 1-(5-phosphoribosyl)-5-[(5-phosphoribosylamino)methylideneamino] imidazole-4-carboxamide isomerase of Halorhodospira halophila (strain DSM 244 / SL1) (Ectothiorhodospira halophila (strain DSM 244 / SL1)).